The following is a 264-amino-acid chain: Apolipoprotein A-I (264 aa).

Residues 1–18 form the signal peptide; it reads MKAVVLAVAVLFLTGSQA. 2 repeat units span residues 67 to 88 and 89 to 110. The segment at 67-264 is 10 X approximate tandem repeats; that stretch reads LKLVDNWDTV…DETSKRLSTQ (198 aa). The residue at position 109 (methionine 109) is a Methionine sulfoxide. The stretch at 111-121 is one 3; half-length repeat; the sequence is KDLEEVKKQVQ. 3 consecutive repeat copies span residues 122 to 143, 144 to 165, and 166 to 187. Residues 188 to 207 form a 7; truncated repeat; it reads PYSDKMRERLAQHLAKLKDS. Methionine 193 is subject to Methionine sulfoxide. Repeat unit 8 spans residues 208–229; that stretch reads TTLAEYRTKASNHLQTLSEKAK. The 9; half-length repeat unit spans residues 230-240; the sequence is PALEDLRQGLT. Repeat 10 spans residues 241–264; the sequence is PMLESFRATIMGWIDETSKRLSTQ. Methionine 242 bears the Methionine sulfoxide mark.

The protein belongs to the apolipoprotein A1/A4/E family. As to quaternary structure, homodimer. Interacts with APOA1BP and CLU. Component of a sperm activating protein complex (SPAP), consisting of APOA1, an immunoglobulin heavy chain, an immunoglobulin light chain and albumin. Interacts with NDRG1. Interacts with SCGB3A2. Interacts with NAXE and YJEFN3. Glycosylated. In terms of processing, palmitoylated. Post-translationally, phosphorylation sites are present in the extracellular medium.

The protein resides in the secreted. In terms of biological role, participates in the reverse transport of cholesterol from tissues to the liver for excretion by promoting cholesterol efflux from tissues and by acting as a cofactor for the lecithin cholesterol acyltransferase (LCAT). As part of the SPAP complex, activates spermatozoa motility. This is Apolipoprotein A-I (Apoa1) from Peromyscus maniculatus bairdii (Prairie deer mouse).